Here is a 986-residue protein sequence, read N- to C-terminus: Bifunctional glutamine synthetase adenylyltransferase/adenylyl-removing enzyme (986 aa).

The adenylyl removase stretch occupies residues 1-475 (MSFPLAHVDA…VFDHLIGEEK (475 aa)). The interval 481-986 (TETLWHDFLE…LFEHNDKYEE (506 aa)) is adenylyl transferase.

This sequence belongs to the GlnE family. Requires Mg(2+) as cofactor.

The enzyme catalyses [glutamine synthetase]-O(4)-(5'-adenylyl)-L-tyrosine + phosphate = [glutamine synthetase]-L-tyrosine + ADP. The catalysed reaction is [glutamine synthetase]-L-tyrosine + ATP = [glutamine synthetase]-O(4)-(5'-adenylyl)-L-tyrosine + diphosphate. Its function is as follows. Involved in the regulation of glutamine synthetase GlnA, a key enzyme in the process to assimilate ammonia. When cellular nitrogen levels are high, the C-terminal adenylyl transferase (AT) inactivates GlnA by covalent transfer of an adenylyl group from ATP to specific tyrosine residue of GlnA, thus reducing its activity. Conversely, when nitrogen levels are low, the N-terminal adenylyl removase (AR) activates GlnA by removing the adenylyl group by phosphorolysis, increasing its activity. The regulatory region of GlnE binds the signal transduction protein PII (GlnB) which indicates the nitrogen status of the cell. The protein is Bifunctional glutamine synthetase adenylyltransferase/adenylyl-removing enzyme of Pasteurella multocida (strain Pm70).